The primary structure comprises 506 residues: Aminoaldehyde dehydrogenase 1b (506 aa).

Asp102 is a Na(+) binding site. Residues 162-164 (TPW) and 188-191 (KPSE) contribute to the NAD(+) site. Na(+) is bound at residue Leu192. Residues 242–245 (SFET) and Glu263 each bind NAD(+). Glu263 (proton acceptor) is an active-site residue. The active-site Nucleophile is the Cys297. NAD(+) is bound by residues Glu396 and Trp462.

It belongs to the aldehyde dehydrogenase family.

The catalysed reaction is 4-aminobutanal + NAD(+) + H2O = 4-aminobutanoate + NADH + 2 H(+). It catalyses the reaction 3-aminopropanal + NAD(+) + H2O = beta-alanine + NADH + 2 H(+). It carries out the reaction 4-(trimethylamino)butanal + NAD(+) + H2O = 4-(trimethylamino)butanoate + NADH + 2 H(+). The enzyme catalyses 4-guanidinobutanal + NAD(+) + H2O = 4-guanidinobutanoate + NADH + 2 H(+). The catalysed reaction is betaine aldehyde + NAD(+) + H2O = glycine betaine + NADH + 2 H(+). It functions in the pathway amine and polyamine biosynthesis; betaine biosynthesis via choline pathway; betaine from betaine aldehyde: step 1/1. Functionally, dehydrogenase that catalyzes the oxidation of several aminoaldehydes. Metabolizes and detoxifies aldehyde products of polyamine degradation to non-toxic amino acids. Catalyzes the oxidation of 4-aminobutanal and 3-aminopropanal to 4-aminobutanoate and beta-alanine, respectively. Catalyzes the oxidation of 4-(trimethylamino)butanal and 4-guanidinobutanal to 4-trimethylammoniobutanoate and 4-guanidinobutanoate, respectively. Catalyzes the oxidation of betaine aldehyde to glycine betaine. The sequence is that of Aminoaldehyde dehydrogenase 1b from Zea mays (Maize).